A 309-amino-acid chain; its full sequence is Putative S-adenosyl-L-methionine-dependent methyltransferase Mflv_0743 (309 aa).

Residues Asp134 and 163–164 (DL) contribute to the S-adenosyl-L-methionine site.

It belongs to the UPF0677 family.

Its function is as follows. Exhibits S-adenosyl-L-methionine-dependent methyltransferase activity. This is Putative S-adenosyl-L-methionine-dependent methyltransferase Mflv_0743 from Mycolicibacterium gilvum (strain PYR-GCK) (Mycobacterium gilvum (strain PYR-GCK)).